The chain runs to 168 residues: mRNA stability protein IGO1 (168 aa).

Residues M1–P13 are compositionally biased toward low complexity. Residues M1 to F31 are disordered. The segment covering K17–F31 has biased composition (polar residues). S32 and S64 each carry phosphoserine. The segment at K125–R168 is disordered. Composition is skewed to low complexity over residues G127–G139 and T146–R168.

This sequence belongs to the endosulfine family. In terms of assembly, interacts with RIM15, DHH1, PBP1, PBP4 and LSM12. Phosphorylated at Ser-64 by RIM15.

Required for TORC1 to properly control gene expression and chronological life span. Plays an essential role in initiation of the G0 program by preventing the degradation of specific nutrient-regulated mRNAs via the 5'-3' mRNA decay pathway. The sequence is that of mRNA stability protein IGO1 (IGO1) from Saccharomyces cerevisiae (strain ATCC 204508 / S288c) (Baker's yeast).